Reading from the N-terminus, the 401-residue chain is MTRPDLNERILSLRKLRLAQCRTRTRRTIERRNGVRLEINGSWLVEFCSNDYLGLAQHFEIIAALQDAAARNGIGATASHLICGHHAIHKALEYELAEWLGYPRALLFGSGFTANLAVQQALLTKENDICVQDRLNHASLIDATRLAGCRLRRYPHLDVDGAAHQLKNAPEGAAMLATDGIFSMDGDIAPLRALSLVARTQQALMYVDDAHGIGVTGPQGRGCIAAAWLSVEEVPLQLVTLSKALGGYGAAVLGSATLIQHLAETARPYIYTTALPPAQAAAALTAIRIARRDEWRRQRLQELVERFRENSRRHGLEIMDSETPIQPLQCGDETTTMAMSAALEREGFLVNAIRPPTVPEGKSRLRVTLSALHTTEQIDTLVQALARSRDALATEAAPVKV.

Position 24 (Arg-24) interacts with substrate. 111–112 is a binding site for pyridoxal 5'-phosphate; sequence GF. His-137 lines the substrate pocket. Residues Ser-183, His-211, and Thr-240 each coordinate pyridoxal 5'-phosphate. Position 243 is an N6-(pyridoxal phosphate)lysine (Lys-243). Thr-357 provides a ligand contact to substrate.

The protein belongs to the class-II pyridoxal-phosphate-dependent aminotransferase family. BioF subfamily. As to quaternary structure, homodimer. Requires pyridoxal 5'-phosphate as cofactor.

It carries out the reaction 6-carboxyhexanoyl-[ACP] + L-alanine + H(+) = (8S)-8-amino-7-oxononanoate + holo-[ACP] + CO2. It participates in cofactor biosynthesis; biotin biosynthesis. Catalyzes the decarboxylative condensation of pimeloyl-[acyl-carrier protein] and L-alanine to produce 8-amino-7-oxononanoate (AON), [acyl-carrier protein], and carbon dioxide. The polypeptide is 8-amino-7-oxononanoate synthase (Xylella fastidiosa (strain M23)).